The following is a 516-amino-acid chain: Putative Rieske 2Fe-2S iron-sulfur protein MT3926 (516 aa).

The Rieske domain maps to 429 to 516 (LYTFFKCLTD…RGHQLRSSRP (88 aa)). 4 residues coordinate [2Fe-2S] cluster: C469, H471, C489, and H492.

[2Fe-2S] cluster serves as cofactor.

In Mycobacterium tuberculosis (strain CDC 1551 / Oshkosh), this protein is Putative Rieske 2Fe-2S iron-sulfur protein MT3926.